Consider the following 635-residue polypeptide: 1-deoxy-D-xylulose-5-phosphate synthase (635 aa).

Residues H74 and 115–117 each bind thiamine diphosphate; that span reads AHS. Mg(2+) is bound at residue D146. Residues 147-148, N176, Y283, and E365 contribute to the thiamine diphosphate site; that span reads GA. N176 provides a ligand contact to Mg(2+).

The protein belongs to the transketolase family. DXPS subfamily. Homodimer. Mg(2+) serves as cofactor. The cofactor is thiamine diphosphate.

It catalyses the reaction D-glyceraldehyde 3-phosphate + pyruvate + H(+) = 1-deoxy-D-xylulose 5-phosphate + CO2. It participates in metabolic intermediate biosynthesis; 1-deoxy-D-xylulose 5-phosphate biosynthesis; 1-deoxy-D-xylulose 5-phosphate from D-glyceraldehyde 3-phosphate and pyruvate: step 1/1. In terms of biological role, catalyzes the acyloin condensation reaction between C atoms 2 and 3 of pyruvate and glyceraldehyde 3-phosphate to yield 1-deoxy-D-xylulose-5-phosphate (DXP). The chain is 1-deoxy-D-xylulose-5-phosphate synthase from Polaromonas sp. (strain JS666 / ATCC BAA-500).